The primary structure comprises 256 residues: UPF0246 protein TERTU_4575 (256 aa).

It belongs to the UPF0246 family.

This chain is UPF0246 protein TERTU_4575, found in Teredinibacter turnerae (strain ATCC 39867 / T7901).